The chain runs to 425 residues: Polyribonucleotide 5'-hydroxyl-kinase Clp1 (425 aa).

Residues Glu22, Lys62, and 124-129 (DVGKST) each bind ATP.

Belongs to the Clp1 family. Clp1 subfamily. As to quaternary structure, component of the tRNA splicing endonuclease complex, composed of CLP1, TSEN2, TSEN15, TSEN34 and TSEN54. Component of pre-mRNA cleavage complex II (CF-II). Also associates with numerous components of the pre-mRNA cleavage complex I (CF-I/CFIm), including NUDT21, CPSF2, CPSF3, CPSF6 and CPSF7. Interacts with CSTF2 and SYMPK. It depends on Mg(2+) as a cofactor. Requires Mn(2+) as cofactor. Ni(2+) is required as a cofactor.

It localises to the nucleus. The catalysed reaction is a 5'-end dephospho-2'-deoxyribonucleoside-DNA + ATP = a 5'-end 5'-phospho-2'-deoxyribonucleoside-DNA + ADP + H(+). The enzyme catalyses a 5'-end dephospho-ribonucleoside-RNA + ATP = a 5'-end 5'-phospho-ribonucleoside-RNA + ADP + H(+). Functionally, polynucleotide kinase that can phosphorylate the 5'-hydroxyl groups of double-stranded RNA (dsRNA), single-stranded RNA (ssRNA), double-stranded DNA (dsDNA) and double-stranded DNA:RNA hybrids. dsRNA is phosphorylated more efficiently than dsDNA, and the RNA component of a DNA:RNA hybrid is phosphorylated more efficiently than the DNA component. Plays a key role in both tRNA splicing and mRNA 3'-end formation. Component of the tRNA splicing endonuclease complex: phosphorylates the 5'-terminus of the tRNA 3'-exon during tRNA splicing; this phosphorylation event is a prerequisite for the subsequent ligation of the two exon halves and the production of a mature tRNA. Its role in tRNA splicing and maturation is required for cerebellar development. Component of the pre-mRNA cleavage complex II (CF-II), which seems to be required for mRNA 3'-end formation. Also phosphorylates the 5'-terminus of exogenously introduced short interfering RNAs (siRNAs), which is a necessary prerequisite for their incorporation into the RNA-induced silencing complex (RISC). However, endogenous siRNAs and microRNAs (miRNAs) that are produced by the cleavage of dsRNA precursors by DICER1 already contain a 5'-phosphate group, so this protein may be dispensible for normal RNA-mediated gene silencing. This chain is Polyribonucleotide 5'-hydroxyl-kinase Clp1, found in Homo sapiens (Human).